We begin with the raw amino-acid sequence, 177 residues long: O-acetyl-ADP-ribose deacetylase (177 aa).

Positions 1-175 (MKTRIHVVQG…LYERLLTQQG (175 aa)) constitute a Macro domain. Substrate-binding positions include 11 to 12 (DI), Asn25, 33 to 35 (GVD), and 122 to 126 (STGVY). The active-site Proton acceptor is the Asp35.

It belongs to the MacroD-type family. YmdB subfamily. Homodimer. Interacts with RNase III.

The catalysed reaction is 3''-O-acetyl-ADP-D-ribose + H2O = ADP-D-ribose + acetate + H(+). It catalyses the reaction 2''-O-acetyl-ADP-D-ribose + H2O = ADP-D-ribose + acetate + H(+). Its function is as follows. Deacetylates O-acetyl-ADP ribose to yield ADP-ribose and free acetate. Down-regulates ribonuclease 3 (RNase III) activity. Acts by interacting directly with the region of the ribonuclease that is required for dimerization/activation. The chain is O-acetyl-ADP-ribose deacetylase from Escherichia coli O157:H7.